Here is a 194-residue protein sequence, read N- to C-terminus: Phosphoheptose isomerase (194 aa).

Residues 34–188 enclose the SIS domain; sequence LANIFTKGKK…IEGVERIMFP (155 aa). Residue 49–51 coordinates substrate; that stretch reads NGG. His-58 and Glu-62 together coordinate Zn(2+). Substrate is bound by residues Glu-62, 90–91, 116–118, Ser-121, and Gln-168; these read ND and STS. Positions 168 and 176 each coordinate Zn(2+).

The protein belongs to the SIS family. GmhA subfamily. Zn(2+) serves as cofactor.

The protein resides in the cytoplasm. It catalyses the reaction 2 D-sedoheptulose 7-phosphate = D-glycero-alpha-D-manno-heptose 7-phosphate + D-glycero-beta-D-manno-heptose 7-phosphate. It functions in the pathway carbohydrate biosynthesis; D-glycero-D-manno-heptose 7-phosphate biosynthesis; D-glycero-alpha-D-manno-heptose 7-phosphate and D-glycero-beta-D-manno-heptose 7-phosphate from sedoheptulose 7-phosphate: step 1/1. Functionally, catalyzes the isomerization of sedoheptulose 7-phosphate in D-glycero-D-manno-heptose 7-phosphate. The polypeptide is Phosphoheptose isomerase (Fusobacterium nucleatum subsp. nucleatum (strain ATCC 25586 / DSM 15643 / BCRC 10681 / CIP 101130 / JCM 8532 / KCTC 2640 / LMG 13131 / VPI 4355)).